We begin with the raw amino-acid sequence, 204 residues long: Carbon disulfide hydrolase (204 aa).

3 residues coordinate Zn(2+): Cys-35, His-88, and Cys-91.

This sequence belongs to the beta-class carbonic anhydrase family. In terms of assembly, forms a hexadecameric catenane homooligomer, through interactions of two interlocked octameric rings. The cofactor is Zn(2+).

The enzyme catalyses carbon disulfide + 2 H2O = 2 hydrogen sulfide + CO2 + 2 H(+). It participates in sulfur metabolism; hydrogen sulfide biosynthesis. Its function is as follows. Catalyzes the conversion of carbon disulfide into hydrogen sulfide and carbon dioxide, with carbonyl sulfide as an intermediate. Likely plays a key role in sulfur metabolism in S.solfataricus. Does not show carbonic anhydrase activity (hydration of CO(2) to carbonate). The chain is Carbon disulfide hydrolase from Saccharolobus solfataricus (strain ATCC 35092 / DSM 1617 / JCM 11322 / P2) (Sulfolobus solfataricus).